We begin with the raw amino-acid sequence, 999 residues long: Probable beta-galactosidase C (999 aa).

The first 21 residues, 1 to 21 (MFFFRFLTTVLLLFNAKLLVA), serve as a signal peptide directing secretion. A glycan (N-linked (GlcNAc...) asparagine) is linked at N25. Residues Y80, N125, E127, and N185 each contribute to the substrate site. E186 functions as the Proton donor in the catalytic mechanism. N-linked (GlcNAc...) asparagine glycosylation is present at N195. Y249 is a binding site for substrate. C255 and C302 form a disulfide bridge. N274 is a glycosylation site (N-linked (GlcNAc...) asparagine). Catalysis depends on E285, which acts as the Nucleophile. Y351 provides a ligand contact to substrate. Residues N389, N441, N512, N519, N600, N675, N713, N757, N808, and N897 are each glycosylated (N-linked (GlcNAc...) asparagine).

This sequence belongs to the glycosyl hydrolase 35 family.

It localises to the secreted. It catalyses the reaction Hydrolysis of terminal non-reducing beta-D-galactose residues in beta-D-galactosides.. Its function is as follows. Cleaves beta-linked terminal galactosyl residues from gangliosides, glycoproteins, and glycosaminoglycans. This Talaromyces marneffei (strain ATCC 18224 / CBS 334.59 / QM 7333) (Penicillium marneffei) protein is Probable beta-galactosidase C (lacC).